Consider the following 370-residue polypeptide: Gap junction delta-4 protein (370 aa).

The Cytoplasmic segment spans residues methionine 1 to threonine 19. Residues methionine 20–alanine 40 form a helical membrane-spanning segment. Residues glycine 41 to arginine 76 are Extracellular-facing. The helical transmembrane segment at phenylalanine 77–leucine 97 threads the bilayer. The Cytoplasmic segment spans residues histidine 98–histidine 146. The chain crosses the membrane as a helical span at residues leucine 147–phenylalanine 167. The Extracellular portion of the chain corresponds to leucine 168 to leucine 196. Residues leucine 197–valine 217 form a helical membrane-spanning segment. The Cytoplasmic segment spans residues cysteine 218 to valine 370. Residues methionine 224–valine 370 are disordered. Residues alanine 246 to glutamate 260 are compositionally biased toward basic and acidic residues. The span at proline 331 to serine 346 shows a compositional bias: low complexity.

It belongs to the connexin family. Delta-type subfamily. A connexon is composed of a hexamer of connexins. As to expression, expressed in pancreas, kidney, skeletal muscle, liver, placenta, and heart.

The protein localises to the cell membrane. The protein resides in the cell junction. It is found in the gap junction. Its function is as follows. One gap junction consists of a cluster of closely packed pairs of transmembrane channels, the connexons, through which materials of low MW diffuse from one cell to a neighboring cell. This chain is Gap junction delta-4 protein (GJD4), found in Homo sapiens (Human).